The following is a 229-amino-acid chain: Ribonuclease HII (229 aa).

The RNase H type-2 domain maps to 42–229; the sequence is TRIAGVDEVG…KPVHKILYQE (188 aa). A divalent metal cation-binding residues include Asp-48, Glu-49, and Asp-139.

It belongs to the RNase HII family. The cofactor is Mn(2+). Requires Mg(2+) as cofactor.

It is found in the cytoplasm. The catalysed reaction is Endonucleolytic cleavage to 5'-phosphomonoester.. Its function is as follows. Endonuclease that specifically degrades the RNA of RNA-DNA hybrids. The chain is Ribonuclease HII from Ruegeria sp. (strain TM1040) (Silicibacter sp.).